A 1039-amino-acid polypeptide reads, in one-letter code: FHIP family protein GG24907 (1039 aa).

Residues serine 498 and serine 805 each carry the phosphoserine modification. 3 disordered regions span residues 831–877 (ATPT…SASS), 904–945 (GISQ…SNSS), and 957–984 (SNTTTHSASTLHGLDGGPSTGGFNSEPA). Composition is skewed to polar residues over residues 855–877 (TSMFSRKSASTSTTPPNGSSASS) and 904–924 (GISQAQTSAGTCETSLSTQPQ). Low complexity predominate over residues 925–945 (AGASRTGATATSAAASGSNSS). The segment covering 957–966 (SNTTTHSAST) has biased composition (polar residues).

The protein belongs to the FHIP family.

The protein is FHIP family protein GG24907 of Drosophila erecta (Fruit fly).